The following is a 431-amino-acid chain: Probable zinc metalloprotease Lema_P086240 (431 aa).

N-linked (GlcNAc...) asparagine glycosylation is present at asparagine 46. Zn(2+)-binding residues include histidine 117, aspartate 137, and glutamate 170. Asparagine 185 carries N-linked (GlcNAc...) asparagine glycosylation. Residue aspartate 197 participates in Zn(2+) binding. N-linked (GlcNAc...) asparagine glycosylation is found at asparagine 258, asparagine 310, asparagine 349, asparagine 359, and asparagine 369. Positions 344 to 431 (PGMPRNVTID…KSPAVYPFPG (88 aa)) constitute a Fibronectin type-III domain.

This sequence belongs to the peptidase M28 family. M28B subfamily. Requires Zn(2+) as cofactor.

The protein localises to the secreted. The polypeptide is Probable zinc metalloprotease Lema_P086240 (Leptosphaeria maculans (strain JN3 / isolate v23.1.3 / race Av1-4-5-6-7-8) (Blackleg fungus)).